A 415-amino-acid polypeptide reads, in one-letter code: Phosphoglycerate kinase (415 aa).

Residues 27–29 (DVN), Arg-44, 67–70 (HQGR), Arg-124, and Arg-164 each bind substrate. Residues Glu-336 and 362–365 (GGHM) contribute to the ATP site.

The protein belongs to the phosphoglycerate kinase family. In terms of assembly, monomer.

Its subcellular location is the cytoplasm. The catalysed reaction is (2R)-3-phosphoglycerate + ATP = (2R)-3-phospho-glyceroyl phosphate + ADP. Its pathway is carbohydrate degradation; glycolysis; pyruvate from D-glyceraldehyde 3-phosphate: step 2/5. The chain is Phosphoglycerate kinase from Sulfolobus acidocaldarius (strain ATCC 33909 / DSM 639 / JCM 8929 / NBRC 15157 / NCIMB 11770).